Here is a 185-residue protein sequence, read N- to C-terminus: Potassium-transporting ATPase KdpC subunit (185 aa).

A helical membrane pass occupies residues 14–34 (ALSLLTGVAYPLALTGIAAVI).

Belongs to the KdpC family. In terms of assembly, the system is composed of three essential subunits: KdpA, KdpB and KdpC.

Its subcellular location is the cell inner membrane. In terms of biological role, part of the high-affinity ATP-driven potassium transport (or Kdp) system, which catalyzes the hydrolysis of ATP coupled with the electrogenic transport of potassium into the cytoplasm. This subunit acts as a catalytic chaperone that increases the ATP-binding affinity of the ATP-hydrolyzing subunit KdpB by the formation of a transient KdpB/KdpC/ATP ternary complex. This is Potassium-transporting ATPase KdpC subunit from Cereibacter sphaeroides (strain KD131 / KCTC 12085) (Rhodobacter sphaeroides).